Consider the following 351-residue polypeptide: MKRKVMLTGDRPTGALHLGHYVGSVVNRLKFQEEYETYFIIADLHTLTTKPDLKSINTIPSNVREMVLDYLACGINPDKVSIYLQSAIPELFELHLIFSMIVTVARLQRIPSIKDMSIAAGLKEIPYGLLGYPVLMSADILMTKANLVPVGRDNESHIEFARELARRFNHLYKNNFFPIPESVFTDSRPLVGIYGKNKMSKSLDNAIFLNDDENLLEKKIMSMYTDPNRIRADIPGNVEGNPIFIYHSFFNSNHEEVEDLKSRYKKGKVGDVEVKKKLFLALNSFLKPIRDKRSFYEAKKKDYIDEIIFDGTSKARFIANKVVKDVKDLIGLSKTWNGIKYSAEKKLKNEE.

Residues 11-13 (RPT) and 19-20 (GH) each bind ATP. A 'HIGH' region motif is present at residues 12 to 20 (PTGALHLGH). Aspartate 139 is an L-tryptophan binding site. Residues 151 to 153 (GRD), leucine 190, and 198 to 202 (KMSKS) each bind ATP. The 'KMSKS' region motif lies at 198–202 (KMSKS).

The protein belongs to the class-I aminoacyl-tRNA synthetase family. In terms of assembly, homodimer.

The protein localises to the cytoplasm. The enzyme catalyses tRNA(Trp) + L-tryptophan + ATP = L-tryptophyl-tRNA(Trp) + AMP + diphosphate + H(+). In terms of biological role, catalyzes the attachment of tryptophan to tRNA(Trp). In Borreliella burgdorferi (strain ATCC 35210 / DSM 4680 / CIP 102532 / B31) (Borrelia burgdorferi), this protein is Tryptophan--tRNA ligase.